A 325-amino-acid polypeptide reads, in one-letter code: Biotin synthase (325 aa).

One can recognise a Radical SAM core domain in the interval 36 to 254 (NEVQLAMLLS…IALARIMFPK (219 aa)). Residues Cys51, Cys55, and Cys58 each coordinate [4Fe-4S] cluster. Positions 95, 126, 186, and 258 each coordinate [2Fe-2S] cluster.

This sequence belongs to the radical SAM superfamily. Biotin synthase family. In terms of assembly, homodimer. Requires [4Fe-4S] cluster as cofactor. The cofactor is [2Fe-2S] cluster.

The catalysed reaction is (4R,5S)-dethiobiotin + (sulfur carrier)-SH + 2 reduced [2Fe-2S]-[ferredoxin] + 2 S-adenosyl-L-methionine = (sulfur carrier)-H + biotin + 2 5'-deoxyadenosine + 2 L-methionine + 2 oxidized [2Fe-2S]-[ferredoxin]. It participates in cofactor biosynthesis; biotin biosynthesis; biotin from 7,8-diaminononanoate: step 2/2. In terms of biological role, catalyzes the conversion of dethiobiotin (DTB) to biotin by the insertion of a sulfur atom into dethiobiotin via a radical-based mechanism. This Neorickettsia sennetsu (strain ATCC VR-367 / Miyayama) (Ehrlichia sennetsu) protein is Biotin synthase.